The following is a 194-amino-acid chain: Phosphoheptose isomerase (194 aa).

Residues 37 to 194 enclose the SIS domain; that stretch reads ISNSFKQGGK…LIEFEMAKQA (158 aa). Position 52–54 (52–54) interacts with substrate; it reads NGG. Zn(2+)-binding residues include histidine 61 and glutamate 65. Substrate contacts are provided by residues glutamate 65, 93–94, 119–121, serine 124, and glutamine 172; these read ND and STS. Glutamine 172 and histidine 180 together coordinate Zn(2+).

This sequence belongs to the SIS family. GmhA subfamily. In terms of assembly, homotetramer. It depends on Zn(2+) as a cofactor.

It localises to the cytoplasm. The catalysed reaction is 2 D-sedoheptulose 7-phosphate = D-glycero-alpha-D-manno-heptose 7-phosphate + D-glycero-beta-D-manno-heptose 7-phosphate. It participates in carbohydrate biosynthesis; D-glycero-D-manno-heptose 7-phosphate biosynthesis; D-glycero-alpha-D-manno-heptose 7-phosphate and D-glycero-beta-D-manno-heptose 7-phosphate from sedoheptulose 7-phosphate: step 1/1. Catalyzes the isomerization of sedoheptulose 7-phosphate in D-glycero-D-manno-heptose 7-phosphate. This is Phosphoheptose isomerase from Haemophilus influenzae (strain 86-028NP).